The primary structure comprises 254 residues: Peptide methionine sulfoxide reductase A5 (254 aa).

Residues 1–33 (MAISLKRNRFFIPYTNLVFFFFLCVSLLDKTVS) form the signal peptide.

This sequence belongs to the MsrA Met sulfoxide reductase family.

It catalyses the reaction L-methionyl-[protein] + [thioredoxin]-disulfide + H2O = L-methionyl-(S)-S-oxide-[protein] + [thioredoxin]-dithiol. It carries out the reaction [thioredoxin]-disulfide + L-methionine + H2O = L-methionine (S)-S-oxide + [thioredoxin]-dithiol. In terms of biological role, catalyzes the reduction of methionine sulfoxide (MetSO) to methionine in proteins. Plays a protective role against oxidative stress by restoring activity to proteins that have been inactivated by methionine oxidation. MSRA family specifically reduces the MetSO S-enantiomer. The polypeptide is Peptide methionine sulfoxide reductase A5 (MSRA5) (Arabidopsis thaliana (Mouse-ear cress)).